The primary structure comprises 473 residues: Bifunctional protein HldE (473 aa).

Residues 1–318 (MKLTLPRYDQ…RAVQREEGSE (318 aa)) form a ribokinase region. ATP is bound at residue 194–197 (NLHE). Asp263 is a catalytic residue. Residues 343–473 (FTNGCFDILH…TAIVEKIRNK (131 aa)) form a cytidylyltransferase region.

This sequence in the N-terminal section; belongs to the carbohydrate kinase PfkB family. The protein in the C-terminal section; belongs to the cytidylyltransferase family. As to quaternary structure, homodimer.

The enzyme catalyses D-glycero-beta-D-manno-heptose 7-phosphate + ATP = D-glycero-beta-D-manno-heptose 1,7-bisphosphate + ADP + H(+). It catalyses the reaction D-glycero-beta-D-manno-heptose 1-phosphate + ATP + H(+) = ADP-D-glycero-beta-D-manno-heptose + diphosphate. The protein operates within nucleotide-sugar biosynthesis; ADP-L-glycero-beta-D-manno-heptose biosynthesis; ADP-L-glycero-beta-D-manno-heptose from D-glycero-beta-D-manno-heptose 7-phosphate: step 1/4. It participates in nucleotide-sugar biosynthesis; ADP-L-glycero-beta-D-manno-heptose biosynthesis; ADP-L-glycero-beta-D-manno-heptose from D-glycero-beta-D-manno-heptose 7-phosphate: step 3/4. Functionally, catalyzes the phosphorylation of D-glycero-D-manno-heptose 7-phosphate at the C-1 position to selectively form D-glycero-beta-D-manno-heptose-1,7-bisphosphate. Its function is as follows. Catalyzes the ADP transfer from ATP to D-glycero-beta-D-manno-heptose 1-phosphate, yielding ADP-D-glycero-beta-D-manno-heptose. This chain is Bifunctional protein HldE, found in Ectopseudomonas mendocina (strain ymp) (Pseudomonas mendocina).